The primary structure comprises 121 residues: Large ribosomal subunit protein bL21 (121 aa).

This sequence belongs to the bacterial ribosomal protein bL21 family. In terms of assembly, part of the 50S ribosomal subunit. Contacts protein L20.

Functionally, this protein binds to 23S rRNA in the presence of protein L20. The sequence is that of Large ribosomal subunit protein bL21 from Gloeobacter violaceus (strain ATCC 29082 / PCC 7421).